The primary structure comprises 333 residues: MVREKVRVSTRTLQWKCVESRIDSKRLYYGRFILSPLMKGQADTIGIAMRRILLGEMEGTCITRAKSEKISHEYSTIVGIQEPVHEILMNLKEIVLKSNLYGIRDASICFKGPGYVTAQNIILPPSVVIVDNTQHIANVTEPIQLCIGLQIERDRGYRINTLKNFQDGSYNIDAIFMPVRNANHSIHSYVNGNEKQEILFLEIWTNGSLTPKEALYEASRNLIDLFIPFLHAEEEKLNFENNEHKVTLPLFTCHDLLAKTKLKKKKKEIAFKSIFIDQLELPPKIYNCLKKSNIHTLLELLTKSKEDLMKIEHFRVEDVKHILDILEIEKHFP.

An alpha N-terminal domain (alpha-NTD) region spans residues Met-1–Glu-233. An alpha C-terminal domain (alpha-CTD) region spans residues Lys-266–Pro-333.

This sequence belongs to the RNA polymerase alpha chain family. In plastids the minimal PEP RNA polymerase catalytic core is composed of four subunits: alpha, beta, beta', and beta''. When a (nuclear-encoded) sigma factor is associated with the core the holoenzyme is formed, which can initiate transcription.

It localises to the plastid. Its subcellular location is the chloroplast. It catalyses the reaction RNA(n) + a ribonucleoside 5'-triphosphate = RNA(n+1) + diphosphate. Its function is as follows. DNA-dependent RNA polymerase catalyzes the transcription of DNA into RNA using the four ribonucleoside triphosphates as substrates. This chain is DNA-directed RNA polymerase subunit alpha, found in Lotus japonicus (Lotus corniculatus var. japonicus).